Consider the following 522-residue polypeptide: 2-isopropylmalate synthase (522 aa).

The 263-residue stretch at 5–267 (VIIFDTTLRD…ETGINAKEIH (263 aa)) folds into the Pyruvate carboxyltransferase domain. Positions 14, 202, 204, and 238 each coordinate Mn(2+). Positions 392–522 (QLQQLVVQSD…MQKNRELGGV (131 aa)) are regulatory domain.

The protein belongs to the alpha-IPM synthase/homocitrate synthase family. LeuA type 1 subfamily. As to quaternary structure, homodimer. It depends on Mn(2+) as a cofactor.

It is found in the cytoplasm. It catalyses the reaction 3-methyl-2-oxobutanoate + acetyl-CoA + H2O = (2S)-2-isopropylmalate + CoA + H(+). It functions in the pathway amino-acid biosynthesis; L-leucine biosynthesis; L-leucine from 3-methyl-2-oxobutanoate: step 1/4. Its function is as follows. Catalyzes the condensation of the acetyl group of acetyl-CoA with 3-methyl-2-oxobutanoate (2-ketoisovalerate) to form 3-carboxy-3-hydroxy-4-methylpentanoate (2-isopropylmalate). The polypeptide is 2-isopropylmalate synthase (Shewanella baltica (strain OS195)).